The primary structure comprises 350 residues: Nicotinate-nucleotide--dimethylbenzimidazole phosphoribosyltransferase (350 aa).

The Proton acceptor role is filled by glutamate 317.

This sequence belongs to the CobT family.

The enzyme catalyses 5,6-dimethylbenzimidazole + nicotinate beta-D-ribonucleotide = alpha-ribazole 5'-phosphate + nicotinate + H(+). The protein operates within nucleoside biosynthesis; alpha-ribazole biosynthesis; alpha-ribazole from 5,6-dimethylbenzimidazole: step 1/2. In terms of biological role, catalyzes the synthesis of alpha-ribazole-5'-phosphate from nicotinate mononucleotide (NAMN) and 5,6-dimethylbenzimidazole (DMB). This is Nicotinate-nucleotide--dimethylbenzimidazole phosphoribosyltransferase from Shewanella sp. (strain MR-7).